The chain runs to 31 residues: Cytochrome b6-f complex subunit 6 (31 aa).

A helical membrane pass occupies residues L4–G24.

The protein belongs to the PetL family. In terms of assembly, the 4 large subunits of the cytochrome b6-f complex are cytochrome b6, subunit IV (17 kDa polypeptide, PetD), cytochrome f and the Rieske protein, while the 4 small subunits are PetG, PetL, PetM and PetN. The complex functions as a dimer.

It is found in the plastid. The protein localises to the chloroplast thylakoid membrane. Its function is as follows. Component of the cytochrome b6-f complex, which mediates electron transfer between photosystem II (PSII) and photosystem I (PSI), cyclic electron flow around PSI, and state transitions. PetL is important for photoautotrophic growth as well as for electron transfer efficiency and stability of the cytochrome b6-f complex. The polypeptide is Cytochrome b6-f complex subunit 6 (Oxybasis rubra (Red goosefoot)).